A 501-amino-acid chain; its full sequence is ATP synthase subunit alpha (501 aa).

ATP is bound at residue glycine 169 to threonine 176.

The protein belongs to the ATPase alpha/beta chains family. As to quaternary structure, F-type ATPases have 2 components, CF(1) - the catalytic core - and CF(0) - the membrane proton channel. CF(1) has five subunits: alpha(3), beta(3), gamma(1), delta(1), epsilon(1). CF(0) has three main subunits: a(1), b(2) and c(9-12). The alpha and beta chains form an alternating ring which encloses part of the gamma chain. CF(1) is attached to CF(0) by a central stalk formed by the gamma and epsilon chains, while a peripheral stalk is formed by the delta and b chains.

It is found in the cell inner membrane. The enzyme catalyses ATP + H2O + 4 H(+)(in) = ADP + phosphate + 5 H(+)(out). Produces ATP from ADP in the presence of a proton gradient across the membrane. The alpha chain is a regulatory subunit. The sequence is that of ATP synthase subunit alpha from Campylobacter jejuni subsp. jejuni serotype O:23/36 (strain 81-176).